Here is a 1023-residue protein sequence, read N- to C-terminus: Phosphoenolpyruvate carboxylase (1023 aa).

Catalysis depends on residues histidine 199 and lysine 669.

The protein belongs to the PEPCase type 1 family. It depends on Mg(2+) as a cofactor.

The enzyme catalyses oxaloacetate + phosphate = phosphoenolpyruvate + hydrogencarbonate. Functionally, forms oxaloacetate, a four-carbon dicarboxylic acid source for the tricarboxylic acid cycle. The protein is Phosphoenolpyruvate carboxylase of Trichormus variabilis (strain ATCC 29413 / PCC 7937) (Anabaena variabilis).